The following is a 301-amino-acid chain: Ornithine carbamoyltransferase (301 aa).

Residues 47–50, Gln-74, Arg-98, and 125–128 contribute to the carbamoyl phosphate site; these read STRT and HPCQ. Residues Asn-156, Asp-220, and 224-225 contribute to the L-ornithine site; that span reads SM. Residues 260-261 and Arg-288 contribute to the carbamoyl phosphate site; that span reads CL.

The protein belongs to the aspartate/ornithine carbamoyltransferase superfamily. OTCase family.

The protein resides in the cytoplasm. It carries out the reaction carbamoyl phosphate + L-ornithine = L-citrulline + phosphate + H(+). Its pathway is amino-acid biosynthesis; L-arginine biosynthesis; L-arginine from L-ornithine and carbamoyl phosphate: step 1/3. Its function is as follows. Reversibly catalyzes the transfer of the carbamoyl group from carbamoyl phosphate (CP) to the N(epsilon) atom of ornithine (ORN) to produce L-citrulline. The polypeptide is Ornithine carbamoyltransferase (Methanobrevibacter smithii (strain ATCC 35061 / DSM 861 / OCM 144 / PS)).